The following is a 771-amino-acid chain: U3 small nucleolar RNA-associated protein 14 homolog A (771 aa).

Residues Pro23–Ala49 are disordered. 5 positions are modified to phosphoserine: Ser29, Ser31, Ser52, Ser77, and Ser81. Positions Glu40 to Ala67 form a coiled coil. Lys122 participates in a covalent cross-link: Glycyl lysine isopeptide (Lys-Gly) (interchain with G-Cter in SUMO2). Thr205 is subject to Phosphothreonine. Coiled coils occupy residues Ser216 to Arg290 and Leu317 to Glu347. Disordered regions lie at residues Thr334–Glu355 and Met367–Gln557. Over residues Glu342–Glu355 the composition is skewed to acidic residues. Residues Leu399–Leu436 are compositionally biased toward basic and acidic residues. Residues Ser405 and Ser407 each carry the phosphoserine modification. Arg433 carries the post-translational modification Citrulline. Residues Ser437 and Ser445 each carry the phosphoserine modification. Residue Lys449 forms a Glycyl lysine isopeptide (Lys-Gly) (interchain with G-Cter in SUMO2) linkage. Ser453 carries the phosphoserine modification. Basic and acidic residues predominate over residues Arg504–Pro529. A Glycyl lysine isopeptide (Lys-Gly) (interchain with G-Cter in SUMO2) cross-link involves residue Lys519. The span at Gly535–Asn544 shows a compositional bias: polar residues. The span at Asp547–Gln557 shows a compositional bias: basic and acidic residues. At Ser569 the chain carries Phosphoserine. Citrulline is present on Arg589. Lys733 participates in a covalent cross-link: Glycyl lysine isopeptide (Lys-Gly) (interchain with G-Cter in SUMO2). The segment covering Arg740–Gln751 has biased composition (polar residues). A disordered region spans residues Arg740–Asp771. Over residues Asn753–Asp771 the composition is skewed to basic residues.

It belongs to the UTP14 family. Interacts with DHX37. Citrullinated by PADI4. Ubiquitously expressed.

The protein localises to the nucleus. It is found in the nucleolus. May be required for ribosome biogenesis. In Homo sapiens (Human), this protein is U3 small nucleolar RNA-associated protein 14 homolog A (UTP14A).